Consider the following 477-residue polypeptide: Pup--protein ligase (477 aa).

Glutamate 16 serves as a coordination point for Mg(2+). Arginine 60 is an ATP binding site. Mg(2+) is bound at residue tyrosine 62. The active-site Proton acceptor is the aspartate 64. Glutamate 70 provides a ligand contact to Mg(2+). ATP is bound by residues threonine 73 and tryptophan 441.

This sequence belongs to the Pup ligase/Pup deamidase family. Pup-conjugating enzyme subfamily.

It carries out the reaction ATP + [prokaryotic ubiquitin-like protein]-L-glutamate + [protein]-L-lysine = ADP + phosphate + N(6)-([prokaryotic ubiquitin-like protein]-gamma-L-glutamyl)-[protein]-L-lysine.. The protein operates within protein degradation; proteasomal Pup-dependent pathway. Its pathway is protein modification; protein pupylation. In terms of biological role, catalyzes the covalent attachment of the prokaryotic ubiquitin-like protein modifier Pup to the proteasomal substrate proteins, thereby targeting them for proteasomal degradation. This tagging system is termed pupylation. The ligation reaction involves the side-chain carboxylate of the C-terminal glutamate of Pup and the side-chain amino group of a substrate lysine. The protein is Pup--protein ligase of Corynebacterium kroppenstedtii (strain DSM 44385 / JCM 11950 / CIP 105744 / CCUG 35717).